Here is a 375-residue protein sequence, read N- to C-terminus: Succinyl-diaminopimelate desuccinylase (375 aa).

Residue histidine 75 coordinates Zn(2+). Residue aspartate 77 is part of the active site. A Zn(2+)-binding site is contributed by aspartate 106. Glutamate 136 serves as the catalytic Proton acceptor. The Zn(2+) site is built by glutamate 137, glutamate 165, and histidine 348.

It belongs to the peptidase M20A family. DapE subfamily. As to quaternary structure, homodimer. Requires Zn(2+) as cofactor. Co(2+) is required as a cofactor.

It catalyses the reaction N-succinyl-(2S,6S)-2,6-diaminopimelate + H2O = (2S,6S)-2,6-diaminopimelate + succinate. It participates in amino-acid biosynthesis; L-lysine biosynthesis via DAP pathway; LL-2,6-diaminopimelate from (S)-tetrahydrodipicolinate (succinylase route): step 3/3. Catalyzes the hydrolysis of N-succinyl-L,L-diaminopimelic acid (SDAP), forming succinate and LL-2,6-diaminopimelate (DAP), an intermediate involved in the bacterial biosynthesis of lysine and meso-diaminopimelic acid, an essential component of bacterial cell walls. The polypeptide is Succinyl-diaminopimelate desuccinylase (Novosphingobium aromaticivorans (strain ATCC 700278 / DSM 12444 / CCUG 56034 / CIP 105152 / NBRC 16084 / F199)).